Reading from the N-terminus, the 306-residue chain is Voltage-dependent anion channel-forming protein RSc3414 (306 aa).

Transmembrane regions (helical) follow at residues 28–48, 50–70, 213–233, and 239–259; these read LFLI…WLPI, VNLS…FLGF, YSVM…FGLV, and FTPV…AIAA.

Belongs to the anion channel-forming bestrophin (TC 1.A.46) family.

It localises to the cell membrane. In Ralstonia nicotianae (strain ATCC BAA-1114 / GMI1000) (Ralstonia solanacearum), this protein is Voltage-dependent anion channel-forming protein RSc3414.